The sequence spans 2381 residues: Nipped-B-like protein A (2381 aa).

The HEAT 1 repeat unit spans residues 85 to 124; it reads SDELEGDVPVLLQLLMSRNPNIFRNKTAPNTPQYPAQAGI. 3 disordered regions span residues 131–211, 240–289, and 329–503; these read PPYK…HLQQ, HLLQ…DIVG, and LAAI…ELPP. The segment covering 138 to 158 has biased composition (polar residues); it reads GSMQGSPASANYQQASMSHSP. Basic and acidic residues-rich tracts occupy residues 254-273 and 333-355; these read GTKD…KSSE and ERME…DKDK. Positions 373-389 are enriched in gly residues; it reads GTAGSGSGAPGGGGGAN. Residues 451-473 show a composition bias toward basic and acidic residues; sequence VKHEHDHDPEHPHYDDKQPDTPR. The PxVxL motif motif lies at 552–565; it reads KKSVKPVVVLQKLS. Basic and acidic residues predominate over residues 570-580; sequence QRLMRERDSRA. Disordered stretches follow at residues 570–604 and 629–708; these read QRLM…SVLK and RKRS…NEVA. Positions 581–592 are enriched in polar residues; that stretch reads SKSGKNRLSSGR. Composition is skewed to basic and acidic residues over residues 633-642 and 658-694; these read TVNERPKYAE and KDRD…RYDD. HEAT repeat units follow at residues 1299–1337, 1375–1413, 1477–1516, and 1843–1881; these read SQSF…VDPS, PQLT…EQPN, YDWF…HILK, and LIHP…KYTG. 2 disordered regions span residues 2005-2095 and 2228-2271; these read IPGR…DLDD and LLGG…GDSA. Basic residues predominate over residues 2006–2021; it reads PGRKSRKRRRRRRRPQ. Positions 2040–2056 are enriched in basic and acidic residues; sequence EEERGAQDEERERHSGD. Residues 2057–2068 show a composition bias toward acidic residues; sequence EEYDDDDYEEDE. Positions 2077–2086 are enriched in basic and acidic residues; that stretch reads KPTEDIRQSE.

Belongs to the SCC2/Nipped-B family.

The protein localises to the nucleus. Functionally, may play a structural role in chromatin. Involved in sister chromatid cohesion, possibly by facilitating the cohesin complex loading. Transcription factor, which may promote cortical neuron migration during brain development by regulating the transcription of crucial genes in this process. The protein is Nipped-B-like protein A (nipbla) of Danio rerio (Zebrafish).